Reading from the N-terminus, the 216-residue chain is Thiopurine S-methyltransferase (216 aa).

The S-adenosyl-L-methionine site is built by Trp10, Leu45, Glu66, and Arg123.

It belongs to the class I-like SAM-binding methyltransferase superfamily. TPMT family.

It is found in the cytoplasm. It carries out the reaction S-adenosyl-L-methionine + a thiopurine = S-adenosyl-L-homocysteine + a thiopurine S-methylether.. This is Thiopurine S-methyltransferase from Pseudomonas putida (strain GB-1).